The following is a 347-amino-acid chain: Uroporphyrinogen decarboxylase (347 aa).

Substrate contacts are provided by residues 24 to 28, D74, Y145, S200, and H315; that span reads RQAGR.

The protein belongs to the uroporphyrinogen decarboxylase family. Homodimer.

It localises to the cytoplasm. The enzyme catalyses uroporphyrinogen III + 4 H(+) = coproporphyrinogen III + 4 CO2. The protein operates within porphyrin-containing compound metabolism; protoporphyrin-IX biosynthesis; coproporphyrinogen-III from 5-aminolevulinate: step 4/4. In terms of biological role, catalyzes the decarboxylation of four acetate groups of uroporphyrinogen-III to yield coproporphyrinogen-III. The chain is Uroporphyrinogen decarboxylase from Hydrogenobaculum sp. (strain Y04AAS1).